The following is a 306-amino-acid chain: MNDYNHYFHFPREEWRKLEVSKDQILTAEELEEIRGLNDRISLQDISEIYLPLIKLIAIQYHEAIFIHGEKMEYLKKKESRAPFIIALAGSVAVGKSTTARVFKLMLDRWFSKTRQVELVTTDGFLFPNKVLEERGIMNKKGFPESYDRDRFAKFLTDLKTNKEAVEVPLYSHFTYDVLDETRMMHNPDIVIIEGINVLQADQHESLFPSDFFDFSVYMDAAEADIKKWYLERFFMLRETAFQDKSSYFHQYTKINKKEAETFALGVWDTINGVNLKENIEKTKYRADLVLHKGTDHLISDIYLRK.

Residue 90 to 97 coordinates ATP; that stretch reads GSVAVGKS.

It belongs to the prokaryotic pantothenate kinase family.

The protein resides in the cytoplasm. The catalysed reaction is (R)-pantothenate + ATP = (R)-4'-phosphopantothenate + ADP + H(+). The protein operates within cofactor biosynthesis; coenzyme A biosynthesis; CoA from (R)-pantothenate: step 1/5. The sequence is that of Pantothenate kinase from Listeria welshimeri serovar 6b (strain ATCC 35897 / DSM 20650 / CCUG 15529 / CIP 8149 / NCTC 11857 / SLCC 5334 / V8).